The primary structure comprises 157 residues: Neutrophil recruitment protein (157 aa).

A signal peptide spans 1–19 (MCSIWLTFFLSFLILNTKA).

It belongs to the PBP/GOBP family. In terms of assembly, interacts with mouse TLR1; the interaction promotes activation of canonical NF-kappa-B signaling in host macrophages. Interacts with human TLR1. Interacts with mouse TLR4; the interaction promotes activation of canonical NF-kappa-B signaling in host macrophages. Interacts with human TLR4. In terms of tissue distribution, female salivary gland (at protein level).

The protein resides in the secreted. Functionally, activates MyD88-dependent canonical NF-kappa-B signaling in host macrophages via interaction with host TLR1 and TLR4; this drives the expression of neutrophil chemoattractants, followed by the subsequent influx of neutrophils and recruitment of myeloid cells at the bite site. Its function is as follows. (Microbial infection) Promotes Zika virus infection in mouse model by facilitating recruitment of flavivirus-permissive myeloid cells at the bite site. (Microbial infection) Promotes dengue virus infection in mouse model by facilitating recruitment of flavivirus-permissive myeloid cells at the bite site. In Aedes aegypti (Yellowfever mosquito), this protein is Neutrophil recruitment protein.